A 148-amino-acid chain; its full sequence is Cystatin-C (148 aa).

The N-terminal stretch at 1-30 (MVGSPRAPLLLLASLIVALALALAVSPAAA) is a signal peptide. Position 31 is a pyrrolidone carboxylic acid (Gln-31). Residues 84–88 (QVVSG) carry the Secondary area of contact motif. Disulfide bonds link Cys-102-Cys-112 and Cys-126-Cys-146.

The protein localises to the secreted. In terms of biological role, this is a thiol proteinase inhibitor. In Bos taurus (Bovine), this protein is Cystatin-C (CST3).